Reading from the N-terminus, the 62-residue chain is UPF0434 protein SPO3421 (62 aa).

This sequence belongs to the UPF0434 family.

This Ruegeria pomeroyi (strain ATCC 700808 / DSM 15171 / DSS-3) (Silicibacter pomeroyi) protein is UPF0434 protein SPO3421.